Reading from the N-terminus, the 318-residue chain is Protein-L-histidine N-pros-methyltransferase (318 aa).

An N-terminal signal peptide occupies residues 1-18; that stretch reads MRLLAGWLCLSLASVWLA. A glycan (N-linked (GlcNAc...) asparagine) is linked at Asn35. S-adenosyl-L-homocysteine is bound by residues Glu174, Asn210, and Tyr295.

It belongs to the METTL9 family. Expressed in liver, colon, small intestine, skin, kidney and to a lesser extent in spleen, lung, thymus and stomach. Not detected in fibroblast and endothelial cells.

It is found in the endoplasmic reticulum. The protein localises to the mitochondrion. The catalysed reaction is L-histidyl-[protein] + S-adenosyl-L-methionine = N(pros)-methyl-L-histidyl-[protein] + S-adenosyl-L-homocysteine + H(+). Functionally, protein-histidine N-methyltransferase that specifically catalyzes 1-methylhistidine (pros-methylhistidine) methylation of target proteins. Specifically methylates the second His of proteins with a His-x-His (HxH) motif (where 'x' is preferably a small amino acid), while exploiting the first one as a recognition signature. Catalyzes methylation of target proteins such as S100A9, NDUFB3, SLC39A5, SLC39A7, ARMC6 and DNAJB12; 1-methylhistidine modification may affect the binding of zinc and other metals to its target proteins. Constitutes the main methyltransferase for the 1-methylhistidine modification in cell. The protein is Protein-L-histidine N-pros-methyltransferase of Mus musculus (Mouse).